Reading from the N-terminus, the 385-residue chain is 8-amino-7-oxononanoate synthase (385 aa).

Residue Arg21 coordinates substrate. Residue 108 to 109 (GY) coordinates pyridoxal 5'-phosphate. Substrate is bound at residue His133. Pyridoxal 5'-phosphate-binding residues include Ser179, His207, and Thr233. At Lys236 the chain carries N6-(pyridoxal phosphate)lysine. Thr350 provides a ligand contact to substrate.

It belongs to the class-II pyridoxal-phosphate-dependent aminotransferase family. BioF subfamily. As to quaternary structure, homodimer. Pyridoxal 5'-phosphate serves as cofactor.

It carries out the reaction 6-carboxyhexanoyl-[ACP] + L-alanine + H(+) = (8S)-8-amino-7-oxononanoate + holo-[ACP] + CO2. The protein operates within cofactor biosynthesis; biotin biosynthesis. In terms of biological role, catalyzes the decarboxylative condensation of pimeloyl-[acyl-carrier protein] and L-alanine to produce 8-amino-7-oxononanoate (AON), [acyl-carrier protein], and carbon dioxide. This chain is 8-amino-7-oxononanoate synthase, found in Pectobacterium atrosepticum (strain SCRI 1043 / ATCC BAA-672) (Erwinia carotovora subsp. atroseptica).